Here is a 79-residue protein sequence, read N- to C-terminus: DNA gyrase inhibitor YacG (79 aa).

Positions 7, 10, 26, and 30 each coordinate Zn(2+).

It belongs to the DNA gyrase inhibitor YacG family. As to quaternary structure, interacts with GyrB. It depends on Zn(2+) as a cofactor.

Functionally, inhibits all the catalytic activities of DNA gyrase by preventing its interaction with DNA. Acts by binding directly to the C-terminal domain of GyrB, which probably disrupts DNA binding by the gyrase. The chain is DNA gyrase inhibitor YacG from Shewanella halifaxensis (strain HAW-EB4).